The following is a 628-amino-acid chain: Nuclear receptor subfamily 4 group A member 3 (628 aa).

The activation function (AF)-1 domain stretch occupies residues 1 to 112 (MPCVQAQYSP…HHHHHHHHHH (112 aa)). Residues 1-140 (MPCVQAQYSP…PSTSMYFKQS (140 aa)) form a required for DNA-PK heterotrimer region. Residues 1–293 (MPCVQAQYSP…NRSSSSGEGT (293 aa)) form an interaction with NCOA1, NCOA2, NCOA3 and KAT2B region. Disordered stretches follow at residues 96–163 (HGYH…DELP) and 269–290 (ASSL…SSSG). Positions 97–113 (GYHHHHHHHHHHHHHHQ) are enriched in basic residues. The segment covering 142-151 (PSTPTTPGFP) has biased composition (pro residues). Low complexity predominate over residues 270 to 289 (SSLLGESPSLPSPPNRSSSS). The nuclear receptor DNA-binding region spans 291 to 366 (EGTCAVCGDN…VGMVKEVVRT (76 aa)). 2 consecutive NR C4-type zinc fingers follow at residues 294–314 (CAVC…CEGC) and 330–354 (CLAN…FQKC). The segment at 366–396 (TDSLKGRRGRLPSKPKSPLQQEPSQPSPPSP) is disordered. A compositionally biased stretch (low complexity) spans 379 to 389 (KPKSPLQQEPS). An interaction with KAT2B region spans residues 381 to 628 (KSPLQQEPSQ…DKLFLDTLPF (248 aa)). An NR LBD domain is found at 396–625 (PPICMMNALV…SVIDKLFLDT (230 aa)).

The protein belongs to the nuclear hormone receptor family. NR4 subfamily. In terms of assembly, interacts with SIX3 (via homeobox); differentially regulates the transcriptional activities of NR4A3. Interacts with NR3C1 (via nuclear receptor DNA-binding domain); the interactions represses transcription activity of NR4A3 on the POMC promoter Nur response element (NurRE). Interacts with TRIM28; the interactions potentiates NR4A3 activity on NurRE promoter. Binds DNA as a monomer and homodimer. Interacts with PARP1; activates PARP1 by improving acetylation of PARP1 and suppressing the interaction between PARP1 and SIRT1. Interacts with the constituents of DNA-PK heterotrimer PRKDC, XRCC6 and XRCC5; phosphorylates and prevents NR4A3 ubiquitinylation and degradation. Interacts with NCOA2; potentiates the activity of the NR4A3. Interacts with NCOA1, NCOA3, MED1 and KAT2B. Interacts with EP300 and NCOA2; mediates the recruitment of MED1 in the coactivator complex. Phosphorylated by PRKDC. As to expression, expressed at high levels in cultured apoptotic neuronal cells and fetal brain, and at low level in adult brain.

It localises to the nucleus. Transcriptional activator that binds to regulatory elements in promoter regions in a cell- and response element (target)-specific manner. Induces gene expression by binding as monomers to the NR4A1 response element (NBRE) 5'-AAAAGGTCA-3' site and as homodimers to the Nur response element (NurRE) site in the promoter of their regulated target genes. Plays a role in the regulation of proliferation, survival and differentiation of many different cell types and also in metabolism and inflammation. Mediates proliferation of vascular smooth muscle, myeloid progenitor cell and type B pancreatic cells; promotes mitogen-induced vascular smooth muscle cell proliferation through transactivation of SKP2 promoter by binding a NBRE site. Upon PDGF stimulation, stimulates vascular smooth muscle cell proliferation by regulating CCND1 and CCND2 expression. In islets, induces type B pancreatic cell proliferation through up-regulation of genes that activate cell cycle, as well as genes that cause degradation of the CDKN1A. Negatively regulates myeloid progenitor cell proliferation by repressing RUNX1 in a NBRE site-independent manner. During inner ear, plays a role as a key mediator of the proliferative growth phase of semicircular canal development. Also mediates survival of neuron and smooth muscle cells; mediates CREB-induced neuronal survival, and during hippocampus development, plays a critical role in pyramidal cell survival and axonal guidance. Is required for S phase entry of the cell cycle and survival of smooth muscle cells by inducing CCND1, resulting in RB1 phosphorylation. Binds to NBRE motif in CCND1 promoter, resulting in the activation of the promoter and CCND1 transcription. Also plays a role in inflammation; Upon TNF stimulation, mediates monocyte adhesion by inducing the expression of VCAM1 and ICAM1 by binding to the NBRE consensus site. In mast cells activated by Fc-epsilon receptor cross-linking, promotes the synthesis and release of cytokines but impairs events leading to degranulation. Also plays a role in metabolism; by modulating feeding behavior; and by playing a role in energy balance by inhibiting the glucocorticoid-induced orexigenic neuropeptides AGRP expression, at least in part by forming a complex with activated NR3C1 on the AGRP-glucocorticoid response element (GRE), and thus weakening the DNA binding activity of NR3C1. Upon catecholamines stimulation, regulates gene expression that controls oxidative metabolism in skeletal muscle. Plays a role in glucose transport by regulating translocation of the SLC2A4 glucose transporter to the cell surface. Finally, during gastrulation plays a crucial role in the formation of anterior mesoderm by controlling cell migration. Also participates in cardiac hypertrophy by activating PARP1. This chain is Nuclear receptor subfamily 4 group A member 3 (Nr4a3), found in Rattus norvegicus (Rat).